The chain runs to 227 residues: Cytochrome c oxidase subunit 2 (227 aa).

The Mitochondrial intermembrane segment spans residues 1–14; the sequence is MAYPLQLGLQDATS. A helical membrane pass occupies residues 15–45; the sequence is PIMEELMNFHDHTLMIVFLISSLVLYIISLM. The Mitochondrial matrix portion of the chain corresponds to 46–59; sequence LTTKLTHTSTMDAQ. Residues 60–87 traverse the membrane as a helical segment; sequence EVETIWTILPAAILVLIALPSLRILYMM. The Mitochondrial intermembrane segment spans residues 88-227; that stretch reads DEINNPVLTV…YFENWSASMI (140 aa). Histidine 161, cysteine 196, glutamate 198, cysteine 200, histidine 204, and methionine 207 together coordinate Cu cation. Mg(2+) is bound at residue glutamate 198. The residue at position 218 (tyrosine 218) is a Phosphotyrosine.

The protein belongs to the cytochrome c oxidase subunit 2 family. In terms of assembly, component of the cytochrome c oxidase (complex IV, CIV), a multisubunit enzyme composed of 14 subunits. The complex is composed of a catalytic core of 3 subunits MT-CO1, MT-CO2 and MT-CO3, encoded in the mitochondrial DNA, and 11 supernumerary subunits COX4I, COX5A, COX5B, COX6A, COX6B, COX6C, COX7A, COX7B, COX7C, COX8 and NDUFA4, which are encoded in the nuclear genome. The complex exists as a monomer or a dimer and forms supercomplexes (SCs) in the inner mitochondrial membrane with NADH-ubiquinone oxidoreductase (complex I, CI) and ubiquinol-cytochrome c oxidoreductase (cytochrome b-c1 complex, complex III, CIII), resulting in different assemblies (supercomplex SCI(1)III(2)IV(1) and megacomplex MCI(2)III(2)IV(2)). Found in a complex with TMEM177, COA6, COX18, COX20, SCO1 and SCO2. Interacts with TMEM177 in a COX20-dependent manner. Interacts with COX20. Interacts with COX16. Cu cation is required as a cofactor.

The protein localises to the mitochondrion inner membrane. The catalysed reaction is 4 Fe(II)-[cytochrome c] + O2 + 8 H(+)(in) = 4 Fe(III)-[cytochrome c] + 2 H2O + 4 H(+)(out). In terms of biological role, component of the cytochrome c oxidase, the last enzyme in the mitochondrial electron transport chain which drives oxidative phosphorylation. The respiratory chain contains 3 multisubunit complexes succinate dehydrogenase (complex II, CII), ubiquinol-cytochrome c oxidoreductase (cytochrome b-c1 complex, complex III, CIII) and cytochrome c oxidase (complex IV, CIV), that cooperate to transfer electrons derived from NADH and succinate to molecular oxygen, creating an electrochemical gradient over the inner membrane that drives transmembrane transport and the ATP synthase. Cytochrome c oxidase is the component of the respiratory chain that catalyzes the reduction of oxygen to water. Electrons originating from reduced cytochrome c in the intermembrane space (IMS) are transferred via the dinuclear copper A center (CU(A)) of subunit 2 and heme A of subunit 1 to the active site in subunit 1, a binuclear center (BNC) formed by heme A3 and copper B (CU(B)). The BNC reduces molecular oxygen to 2 water molecules using 4 electrons from cytochrome c in the IMS and 4 protons from the mitochondrial matrix. In Micaelamys namaquensis (Namaqua rock rat), this protein is Cytochrome c oxidase subunit 2 (MT-CO2).